The chain runs to 127 residues: MSESVGNIRIDPRDTIFAKIISGAIPSKKFYDDEYCIAIEDINPQAPVHLLVIPKLAVGGLSDVANVDLEKYKESMGHIMSKIHHIASLKGADSYRLVINEGVLGQQSVRWLHIHILGGRQMNWPPG.

The HIT domain maps to Ile-16 to Gly-127.

This Dictyostelium discoideum (Social amoeba) protein is Protein pkiA (pkiA).